Here is a 500-residue protein sequence, read N- to C-terminus: MAKAELMDYDEAIEMFEPVLGFEVHVELNTRTKMFSDAPNFFGGEPNTNITPVDLGLPGSLPVVNEQAVKHSISLGLALGCEIAPSSRFARKNYFYPDLAKNYQISQFDEPIAFRGSVEVEMPDGRIVTVPIERAHMEEDAGKLTHVGGATGRIQGADHSLVDYNRAGVPLVEIVTDIIYGAEGEAPELAKAYMSTIRDIVVALGISDAKMERGNLRCDANISLSPRGSGKLGTRTETKNVNSLRSVERAIRYEIQRQAAILAAGGTITQETRHWHEDTGRTSAGRPKSDADDYRYFPEPDLLPVQPSAELIEELRVALPESPAIRRRRLKAEWGFTDLEFQDVVNSGLLTELVDTVEAGAAPQAARKWWTGEIARIANARGVDAATLITAEQVASVIELVEAGTLTNRLARDVIEGVIDGEGTAQEVVDARGLAVVSDDGPLIAAIDEALQAQPDVLAKIRDGKVQAAGAVIGAVMKAMRGQADAARVRELVLERAQAS.

The protein belongs to the GatB/GatE family. GatB subfamily. Heterotrimer of A, B and C subunits.

The catalysed reaction is L-glutamyl-tRNA(Gln) + L-glutamine + ATP + H2O = L-glutaminyl-tRNA(Gln) + L-glutamate + ADP + phosphate + H(+). It carries out the reaction L-aspartyl-tRNA(Asn) + L-glutamine + ATP + H2O = L-asparaginyl-tRNA(Asn) + L-glutamate + ADP + phosphate + 2 H(+). Functionally, allows the formation of correctly charged Asn-tRNA(Asn) or Gln-tRNA(Gln) through the transamidation of misacylated Asp-tRNA(Asn) or Glu-tRNA(Gln) in organisms which lack either or both of asparaginyl-tRNA or glutaminyl-tRNA synthetases. The reaction takes place in the presence of glutamine and ATP through an activated phospho-Asp-tRNA(Asn) or phospho-Glu-tRNA(Gln). The polypeptide is Aspartyl/glutamyl-tRNA(Asn/Gln) amidotransferase subunit B (Clavibacter sepedonicus (Clavibacter michiganensis subsp. sepedonicus)).